Reading from the N-terminus, the 122-residue chain is UPF0102 protein CPE1705 (122 aa).

The protein belongs to the UPF0102 family.

The protein is UPF0102 protein CPE1705 of Clostridium perfringens (strain 13 / Type A).